Here is a 592-residue protein sequence, read N- to C-terminus: Putative D-/L-hydantoinase subunit B (592 aa).

This sequence belongs to the HyuB family. In terms of assembly, may form a complex with HyuA.

Involved in the asymmetric conversion of racemic 5-substituted hydantoins to the corresponding L-amino acids. HyuA and HyuB are both required for the conversion of D- and L-5-substituted hydantoins to corresponding N-carbamoyl-D- and N-carbamoyl-L-amino acids, respectively. This Pseudomonas sp. (strain NS671) protein is Putative D-/L-hydantoinase subunit B.